Here is a 312-residue protein sequence, read N- to C-terminus: UDP-N-acetylenolpyruvoylglucosamine reductase (312 aa).

The FAD-binding PCMH-type domain occupies 37-205; it reads VGGPADALVV…VCAEFALCPG (169 aa). R185 is a catalytic residue. S234 functions as the Proton donor in the catalytic mechanism. E304 is a catalytic residue.

The protein belongs to the MurB family. It depends on FAD as a cofactor.

It localises to the cytoplasm. It catalyses the reaction UDP-N-acetyl-alpha-D-muramate + NADP(+) = UDP-N-acetyl-3-O-(1-carboxyvinyl)-alpha-D-glucosamine + NADPH + H(+). The protein operates within cell wall biogenesis; peptidoglycan biosynthesis. In terms of biological role, cell wall formation. In Syntrophus aciditrophicus (strain SB), this protein is UDP-N-acetylenolpyruvoylglucosamine reductase.